Here is a 398-residue protein sequence, read N- to C-terminus: Acetate kinase (398 aa).

Residue Asn7 coordinates Mg(2+). Lys14 is an ATP binding site. Arg91 lines the substrate pocket. The active-site Proton donor/acceptor is Asp148. ATP-binding positions include 208–212 (HLGNG), 282–284 (DFR), and 330–334 (GVGEN). Mg(2+) is bound at residue Glu383.

Belongs to the acetokinase family. In terms of assembly, homodimer. Requires Mg(2+) as cofactor. It depends on Mn(2+) as a cofactor.

The protein localises to the cytoplasm. The enzyme catalyses acetate + ATP = acetyl phosphate + ADP. It participates in metabolic intermediate biosynthesis; acetyl-CoA biosynthesis; acetyl-CoA from acetate: step 1/2. Its function is as follows. Catalyzes the formation of acetyl phosphate from acetate and ATP. Can also catalyze the reverse reaction. The chain is Acetate kinase from Carboxydothermus hydrogenoformans (strain ATCC BAA-161 / DSM 6008 / Z-2901).